A 227-amino-acid polypeptide reads, in one-letter code: Ribonuclease 3 (227 aa).

Positions 4–133 (FEKLEKLLSY…LIAAIYLDSN (130 aa)) constitute an RNase III domain. Glu-46 contributes to the Mg(2+) binding site. Residue Asp-50 is part of the active site. Residues Asn-119 and Glu-122 each contribute to the Mg(2+) site. Residue Glu-122 is part of the active site. Residues 158–226 (DPKTALQEWA…ARSLLHRLKN (69 aa)) enclose the DRBM domain.

Belongs to the ribonuclease III family. As to quaternary structure, homodimer. The cofactor is Mg(2+).

Its subcellular location is the cytoplasm. It catalyses the reaction Endonucleolytic cleavage to 5'-phosphomonoester.. Its function is as follows. Digests double-stranded RNA. Involved in the processing of primary rRNA transcript to yield the immediate precursors to the large and small rRNAs (23S and 16S). Processes some mRNAs, and tRNAs when they are encoded in the rRNA operon. Processes pre-crRNA and tracrRNA of type II CRISPR loci if present in the organism. In Rickettsia conorii (strain ATCC VR-613 / Malish 7), this protein is Ribonuclease 3.